The chain runs to 238 residues: DNA repair protein RecO (238 aa).

This sequence belongs to the RecO family.

In terms of biological role, involved in DNA repair and RecF pathway recombination. The chain is DNA repair protein RecO from Anaplasma marginale (strain St. Maries).